The following is a 480-amino-acid chain: uncharacterized protein (480 aa).

The segment at 1-20 (MDVKDTGINRSDTPISDQDH) is disordered.

This is an uncharacterized protein from Arabidopsis thaliana (Mouse-ear cress).